Consider the following 231-residue polypeptide: Transmembrane protein 225 (231 aa).

Over 1 to 13 (MMRIPNRSIQAAN) the chain is Cytoplasmic. A helical transmembrane segment spans residues 14 to 34 (IFFSSGAILLLIAGLIMENWV). Residues 35–71 (ELIPKVRKDKVTHSPWLGCCPPFWPEESLEAIRRMMM) lie on the Extracellular side of the membrane. Residues 72–92 (MSLNISIYLNLIIGLQFTYMI) form a helical membrane-spanning segment. Residues 93 to 99 (SQNKCVH) lie on the Cytoplasmic side of the membrane. A helical transmembrane segment spans residues 100–120 (LLIGFLSFFTGCLLFYAIIVY). The Extracellular portion of the chain corresponds to 121–139 (HHKLNKGQYVYFVNYKTKW). Residues 140 to 160 (IVFTIYLTIALFLTCGIFSFI) traverse the membrane as a helical segment. The Cytoplasmic segment spans residues 161–231 (QCTNRCACMK…LQSRRVTWAL (71 aa)). The RVxF signature appears at 225-229 (RRVTW).

Interacts (via RVxF motif) with PPP1CC. As to expression, expressed in testis, specifically in spermatocytes and round spermatids.

It is found in the cytoplasmic vesicle. The protein resides in the secretory vesicle. Its subcellular location is the acrosome membrane. Functionally, probably inhibits protein phosphatase 1 (PP1) in sperm via binding to catalytic subunit PPP1CC. The sequence is that of Transmembrane protein 225 (Tmem225) from Rattus norvegicus (Rat).